The primary structure comprises 483 residues: Aspartyl/glutamyl-tRNA(Asn/Gln) amidotransferase subunit B (483 aa).

The protein belongs to the GatB/GatE family. GatB subfamily. Heterotrimer of A, B and C subunits.

It carries out the reaction L-glutamyl-tRNA(Gln) + L-glutamine + ATP + H2O = L-glutaminyl-tRNA(Gln) + L-glutamate + ADP + phosphate + H(+). The catalysed reaction is L-aspartyl-tRNA(Asn) + L-glutamine + ATP + H2O = L-asparaginyl-tRNA(Asn) + L-glutamate + ADP + phosphate + 2 H(+). Its function is as follows. Allows the formation of correctly charged Asn-tRNA(Asn) or Gln-tRNA(Gln) through the transamidation of misacylated Asp-tRNA(Asn) or Glu-tRNA(Gln) in organisms which lack either or both of asparaginyl-tRNA or glutaminyl-tRNA synthetases. The reaction takes place in the presence of glutamine and ATP through an activated phospho-Asp-tRNA(Asn) or phospho-Glu-tRNA(Gln). This Rickettsia typhi (strain ATCC VR-144 / Wilmington) protein is Aspartyl/glutamyl-tRNA(Asn/Gln) amidotransferase subunit B.